The chain runs to 221 residues: 7-cyano-7-deazaguanine synthase (221 aa).

Residue 8–18 (MSGGMDSTLCA) coordinates ATP. Zn(2+) is bound by residues cysteine 187, cysteine 195, cysteine 198, and cysteine 201.

It belongs to the QueC family. Zn(2+) is required as a cofactor.

The catalysed reaction is 7-carboxy-7-deazaguanine + NH4(+) + ATP = 7-cyano-7-deazaguanine + ADP + phosphate + H2O + H(+). It participates in purine metabolism; 7-cyano-7-deazaguanine biosynthesis. Catalyzes the ATP-dependent conversion of 7-carboxy-7-deazaguanine (CDG) to 7-cyano-7-deazaguanine (preQ(0)). In Campylobacter concisus (strain 13826), this protein is 7-cyano-7-deazaguanine synthase.